The sequence spans 610 residues: UvrABC system protein C (610 aa).

A GIY-YIG domain is found at 16-94 (SQPGVYRMYD…IKLYQPRYNV (79 aa)). Residues 204–239 (DQVLTQLIARMEKASQDLAFEEAARIRDQIQAVRRV) enclose the UVR domain.

It belongs to the UvrC family. In terms of assembly, interacts with UvrB in an incision complex.

It localises to the cytoplasm. In terms of biological role, the UvrABC repair system catalyzes the recognition and processing of DNA lesions. UvrC both incises the 5' and 3' sides of the lesion. The N-terminal half is responsible for the 3' incision and the C-terminal half is responsible for the 5' incision. The chain is UvrABC system protein C from Salmonella paratyphi C (strain RKS4594).